A 366-amino-acid chain; its full sequence is Aminomethyltransferase (366 aa).

It belongs to the GcvT family. In terms of assembly, the glycine cleavage system is composed of four proteins: P, T, L and H.

It catalyses the reaction N(6)-[(R)-S(8)-aminomethyldihydrolipoyl]-L-lysyl-[protein] + (6S)-5,6,7,8-tetrahydrofolate = N(6)-[(R)-dihydrolipoyl]-L-lysyl-[protein] + (6R)-5,10-methylene-5,6,7,8-tetrahydrofolate + NH4(+). Its function is as follows. The glycine cleavage system catalyzes the degradation of glycine. The protein is Aminomethyltransferase of Chlorobium chlorochromatii (strain CaD3).